The sequence spans 251 residues: Pyridoxine 5'-phosphate synthase (251 aa).

N7 is a 3-amino-2-oxopropyl phosphate binding site. 9-10 (DH) provides a ligand contact to 1-deoxy-D-xylulose 5-phosphate. Residue R18 participates in 3-amino-2-oxopropyl phosphate binding. The Proton acceptor role is filled by H43. 1-deoxy-D-xylulose 5-phosphate is bound by residues R45 and H50. E73 (proton acceptor) is an active-site residue. T103 lines the 1-deoxy-D-xylulose 5-phosphate pocket. H197 acts as the Proton donor in catalysis. 3-amino-2-oxopropyl phosphate-binding positions include G198 and 219–220 (GH).

It belongs to the PNP synthase family. As to quaternary structure, homooctamer; tetramer of dimers.

It localises to the cytoplasm. The enzyme catalyses 3-amino-2-oxopropyl phosphate + 1-deoxy-D-xylulose 5-phosphate = pyridoxine 5'-phosphate + phosphate + 2 H2O + H(+). It participates in cofactor biosynthesis; pyridoxine 5'-phosphate biosynthesis; pyridoxine 5'-phosphate from D-erythrose 4-phosphate: step 5/5. In terms of biological role, catalyzes the complicated ring closure reaction between the two acyclic compounds 1-deoxy-D-xylulose-5-phosphate (DXP) and 3-amino-2-oxopropyl phosphate (1-amino-acetone-3-phosphate or AAP) to form pyridoxine 5'-phosphate (PNP) and inorganic phosphate. The polypeptide is Pyridoxine 5'-phosphate synthase (Caulobacter sp. (strain K31)).